The primary structure comprises 449 residues: UPF0761 membrane protein Cpha266_1653 (449 aa).

6 consecutive transmembrane segments (helical) span residues 77–97 (LLSLVPLLSVTLSILRVFPVF), 133–153 (SVPLLGVVFLFIIALSLISTI), 173–193 (FTLYWTVLTLGPVLIGSSLVA), 214–234 (LLSFLPFLNSVIAFFLLYMLV), 244–264 (AVYGSLLAAVLFELSKKWFVF), and 277–297 (GALSVIPMLFFWIYLEWVVVL).

Belongs to the UPF0761 family.

Its subcellular location is the cell inner membrane. The sequence is that of UPF0761 membrane protein Cpha266_1653 from Chlorobium phaeobacteroides (strain DSM 266 / SMG 266 / 2430).